Consider the following 63-residue polypeptide: Large ribosomal subunit protein eL29 (63 aa).

Over residues 1–26 (MAKSKNHTAHNQTRKAHRNGIKKPKT) the composition is skewed to basic residues. The segment at 1–35 (MAKSKNHTAHNQTRKAHRNGIKKPKTYKYPSLKGV) is disordered.

Belongs to the eukaryotic ribosomal protein eL29 family. Component of the large ribosomal subunit. Mature ribosomes consist of a small (40S) and a large (60S) subunit. The 40S subunit contains about 32 different proteins and 1 molecule of RNA (18S). The 60S subunit contains 45 different proteins and 3 molecules of RNA (25S, 5.8S and 5S).

The protein resides in the cytoplasm. Functionally, component of the ribosome, a large ribonucleoprotein complex responsible for the synthesis of proteins in the cell. The small ribosomal subunit (SSU) binds messenger RNAs (mRNAs) and translates the encoded message by selecting cognate aminoacyl-transfer RNA (tRNA) molecules. The large subunit (LSU) contains the ribosomal catalytic site termed the peptidyl transferase center (PTC), which catalyzes the formation of peptide bonds, thereby polymerizing the amino acids delivered by tRNAs into a polypeptide chain. The nascent polypeptides leave the ribosome through a tunnel in the LSU and interact with protein factors that function in enzymatic processing, targeting, and the membrane insertion of nascent chains at the exit of the ribosomal tunnel. The sequence is that of Large ribosomal subunit protein eL29 from Candida albicans (strain SC5314 / ATCC MYA-2876) (Yeast).